Reading from the N-terminus, the 418-residue chain is Adenosylhomocysteinase (418 aa).

Residues Thr53, Asp125, and Glu150 each contribute to the substrate site. 151–153 (TTT) serves as a coordination point for NAD(+). Substrate is bound by residues Lys180 and Asp184. NAD(+) is bound by residues Asn185, 214–219 (GYGWCG), Glu237, Asn272, 293–295 (SGH), and Asn340.

It belongs to the adenosylhomocysteinase family. NAD(+) serves as cofactor.

The protein localises to the cytoplasm. It carries out the reaction S-adenosyl-L-homocysteine + H2O = L-homocysteine + adenosine. It functions in the pathway amino-acid biosynthesis; L-homocysteine biosynthesis; L-homocysteine from S-adenosyl-L-homocysteine: step 1/1. In terms of biological role, may play a key role in the regulation of the intracellular concentration of adenosylhomocysteine. The sequence is that of Adenosylhomocysteinase from Aquifex aeolicus (strain VF5).